The following is a 306-amino-acid chain: 4-diphosphocytidyl-2-C-methyl-D-erythritol kinase (306 aa).

Lys23 is a catalytic residue. 108–118 (PIAAGIGGGSA) lines the ATP pocket. Residue Asp150 is part of the active site.

This sequence belongs to the GHMP kinase family. IspE subfamily.

The enzyme catalyses 4-CDP-2-C-methyl-D-erythritol + ATP = 4-CDP-2-C-methyl-D-erythritol 2-phosphate + ADP + H(+). It functions in the pathway isoprenoid biosynthesis; isopentenyl diphosphate biosynthesis via DXP pathway; isopentenyl diphosphate from 1-deoxy-D-xylulose 5-phosphate: step 3/6. Functionally, catalyzes the phosphorylation of the position 2 hydroxy group of 4-diphosphocytidyl-2C-methyl-D-erythritol. The sequence is that of 4-diphosphocytidyl-2-C-methyl-D-erythritol kinase from Rhodopseudomonas palustris (strain BisB18).